Here is an 835-residue protein sequence, read N- to C-terminus: MIGILKKVFDVNQRQIKRMQKTVEQIDALESSIKPLTDEQLKGKTLEFKERLTKGETVDDLLPEAFAVVREAATRVLGMRPYGVQLMGGIALHEGNISEMKTGEGKTLTSTLPVYLNALTGKGVHVVTVNEYLAQRDASEMGQLHEFLGLTVGINLNSMSREEKQEAYAADITYSTNNELGFDYLRDNMGLYKEECVQRPLHFAIIDEVDSILVDEARTPLIISGQAQKSTELYMFANAFVRTLENEKDYSFDVKTKNVMLTEDGITKAEKAFHIENLFDLKHVALLHHINQGLRAHVVMHRDTDYVVQEGEIVIVDQFTGRLMKGRRYSEGLHQAIEAKEGVEIQNESMTLATITFQNYFRMYEKLSGMTGTAKTEEEEFRNIYNMNVIVIPTNKPIIRDDRADLIFKSMEGKFNAVVEDIVNRHKKGQPVLVGTVAIETSELISKMLTRKGVRHNILNAKNHAREADIIAEAGIKGAVTIATNMAGRGTDIKLGDDVKNVGLAVIGTERHESRRIDNQLRGRAGRQGDPGVTQFYLSMEDELMRRFGSDNMKAMMDRLGMDDSQPIESKMVSRAVESAQKRVEGNNYDARKQLLQYDDVLRQQREVIYKQRQEVMESDNLRGIIEGMMKSTVERAVALHTQEEIEEDWNIKGLVDYLNTNLLQDGDVKEEELRRLAPEEMSEPIIEKLIERYNEKEKLMPEEQMREFEKVVVFRVVDTKWTEHIDAMDHLREGIHLRAYGQIDPLREYQMEGFAMFESMVASIEEEISRYIMKAEIEQNLERQEVVQGEAVHPSSDGEEAKKKPVVKGDQVGRNDLCKCGSGKKYKNCCGIVQ.

Residues glutamine 85, 103-107, and aspartate 492 contribute to the ATP site; that span reads GEGKT. The interval 788-807 is disordered; the sequence is VQGEAVHPSSDGEEAKKKPV. Residues cysteine 819, cysteine 821, cysteine 830, and cysteine 831 each contribute to the Zn(2+) site.

Belongs to the SecA family. Monomer and homodimer. Part of the essential Sec protein translocation apparatus which comprises SecA, SecYEG and auxiliary proteins SecDF. Other proteins may also be involved. The cofactor is Zn(2+).

The protein localises to the cell membrane. Its subcellular location is the cytoplasm. It carries out the reaction ATP + H2O + cellular proteinSide 1 = ADP + phosphate + cellular proteinSide 2.. In terms of biological role, part of the Sec protein translocase complex. Interacts with the SecYEG preprotein conducting channel. Has a central role in coupling the hydrolysis of ATP to the transfer of proteins into and across the cell membrane, serving as an ATP-driven molecular motor driving the stepwise translocation of polypeptide chains across the membrane. This chain is Protein translocase subunit SecA, found in Bacillus cereus (strain ATCC 14579 / DSM 31 / CCUG 7414 / JCM 2152 / NBRC 15305 / NCIMB 9373 / NCTC 2599 / NRRL B-3711).